The primary structure comprises 197 residues: Nucleoside triphosphate pyrophosphatase (197 aa).

Asp74 serves as the catalytic Proton acceptor.

Belongs to the Maf family. It depends on a divalent metal cation as a cofactor.

Its subcellular location is the cytoplasm. The enzyme catalyses a ribonucleoside 5'-triphosphate + H2O = a ribonucleoside 5'-phosphate + diphosphate + H(+). It carries out the reaction a 2'-deoxyribonucleoside 5'-triphosphate + H2O = a 2'-deoxyribonucleoside 5'-phosphate + diphosphate + H(+). In terms of biological role, nucleoside triphosphate pyrophosphatase. May have a dual role in cell division arrest and in preventing the incorporation of modified nucleotides into cellular nucleic acids. The chain is Nucleoside triphosphate pyrophosphatase from Granulibacter bethesdensis (strain ATCC BAA-1260 / CGDNIH1).